The primary structure comprises 290 residues: Ribosomal RNA small subunit methyltransferase A (290 aa).

Residues Asn27, Leu29, Gly54, Glu75, Asp100, and Asn125 each coordinate S-adenosyl-L-methionine.

The protein belongs to the class I-like SAM-binding methyltransferase superfamily. rRNA adenine N(6)-methyltransferase family. RsmA subfamily.

The protein resides in the cytoplasm. It catalyses the reaction adenosine(1518)/adenosine(1519) in 16S rRNA + 4 S-adenosyl-L-methionine = N(6)-dimethyladenosine(1518)/N(6)-dimethyladenosine(1519) in 16S rRNA + 4 S-adenosyl-L-homocysteine + 4 H(+). Its function is as follows. Specifically dimethylates two adjacent adenosines (A1518 and A1519) in the loop of a conserved hairpin near the 3'-end of 16S rRNA in the 30S particle. May play a critical role in biogenesis of 30S subunits. The sequence is that of Ribosomal RNA small subunit methyltransferase A from Streptococcus agalactiae serotype Ia (strain ATCC 27591 / A909 / CDC SS700).